The chain runs to 176 residues: MAENEHFRNGIDYVELVNQEGHTFHYICRAGNMNELVDMAPVILRNLDLLFQYDHEGRQCTHIAAEYDVSNAVMKIELLVMLGADINSRELKFGNTLLHIAAGTENYQLAEWLCKKPGVELGAINFLYKTAYHIAYERQNARMMEILRVNGAVCDDPIDIDESDETSSESNEGISI.

3 ANK repeats span residues glutamate 56–serine 88, phenylalanine 93–alanine 123, and leucine 127–aspartate 156.

The protein belongs to the polydnaviridae I-Kappa-B-like protein family.

Suppresses the host immune response through NF-kappa-B inactivation. Possesses ankyrin repeat domains required for NF-kappa-B binding but lacks the regulatory regions required for dissociation from NF-kappa-B and degradation. Therefore, prevents host NF-kappa-B release and subsequent activation. The polypeptide is I-Kappa-B like protein G1 (G3) (Microplitis demolitor (Parasitoid wasp)).